Consider the following 164-residue polypeptide: Small ribosomal subunit protein uS5 (164 aa).

Residues 10-73 (LEERVVAVNR…DDAKKNLIEV (64 aa)) form the S5 DRBM domain.

It belongs to the universal ribosomal protein uS5 family. As to quaternary structure, part of the 30S ribosomal subunit. Contacts proteins S4 and S8.

With S4 and S12 plays an important role in translational accuracy. In terms of biological role, located at the back of the 30S subunit body where it stabilizes the conformation of the head with respect to the body. This chain is Small ribosomal subunit protein uS5, found in Streptococcus pneumoniae serotype 2 (strain D39 / NCTC 7466).